Reading from the N-terminus, the 155-residue chain is Small ribosomal subunit protein bS16 (155 aa).

Residues 113–155 (ADGAPTGEAIQQKKKKAPKKAEAAEAEAPAEEPAAESADAASE) are disordered. Over residues 136 to 146 (AEAEAPAEEPA) the composition is skewed to acidic residues.

This sequence belongs to the bacterial ribosomal protein bS16 family.

The protein is Small ribosomal subunit protein bS16 of Mycobacteroides abscessus (strain ATCC 19977 / DSM 44196 / CCUG 20993 / CIP 104536 / JCM 13569 / NCTC 13031 / TMC 1543 / L948) (Mycobacterium abscessus).